We begin with the raw amino-acid sequence, 343 residues long: Dihydroorotase (343 aa).

H13 and H15 together coordinate Zn(2+). Substrate-binding positions include 15–17 (HLR) and N41. Residues K99, H136, and H174 each coordinate Zn(2+). K99 is modified (N6-carboxylysine). H136 lines the substrate pocket. Residue L219 coordinates substrate. D247 serves as a coordination point for Zn(2+). Residue D247 is part of the active site. Residues H251 and A263 each contribute to the substrate site.

It belongs to the metallo-dependent hydrolases superfamily. DHOase family. Class II DHOase subfamily. Homodimer. It depends on Zn(2+) as a cofactor.

It catalyses the reaction (S)-dihydroorotate + H2O = N-carbamoyl-L-aspartate + H(+). The protein operates within pyrimidine metabolism; UMP biosynthesis via de novo pathway; (S)-dihydroorotate from bicarbonate: step 3/3. Catalyzes the reversible cyclization of carbamoyl aspartate to dihydroorotate. In Shewanella baltica (strain OS155 / ATCC BAA-1091), this protein is Dihydroorotase.